The sequence spans 376 residues: Dihydroorotate dehydrogenase (quinone) (376 aa).

FMN-binding positions include 78–82 and Thr-102; that span reads AGFDK. Lys-82 contributes to the substrate binding site. Residue 127–131 coordinates substrate; it reads NRMGF. FMN is bound by residues Asn-157 and Asn-190. Asn-190 contacts substrate. The Nucleophile role is filled by Ser-193. Asn-195 contributes to the substrate binding site. FMN contacts are provided by Lys-228 and Thr-256. 257–258 contacts substrate; the sequence is NT. Residues Gly-286, Gly-315, and 336 to 337 each bind FMN; that span reads YT.

This sequence belongs to the dihydroorotate dehydrogenase family. Type 2 subfamily. Monomer. It depends on FMN as a cofactor.

The protein localises to the cell membrane. It catalyses the reaction (S)-dihydroorotate + a quinone = orotate + a quinol. The protein operates within pyrimidine metabolism; UMP biosynthesis via de novo pathway; orotate from (S)-dihydroorotate (quinone route): step 1/1. Its function is as follows. Catalyzes the conversion of dihydroorotate to orotate with quinone as electron acceptor. The polypeptide is Dihydroorotate dehydrogenase (quinone) (Trichormus variabilis (strain ATCC 29413 / PCC 7937) (Anabaena variabilis)).